The following is a 192-amino-acid chain: Putative manganese efflux pump MntP (192 aa).

6 helical membrane passes run 2–22, 41–61, 62–82, 109–129, 136–156, and 172–192; these read IAIIVQTLLISVSVAMDAFAV, SALWFGGSQALFLILGHYAAS, AFSAYVTAFDHWIIFGLLAFI, MLPLAVACSIDAFAVGVSLAF, FAILCISVVTGLFSAAGLYIG, and GVVLILIGVKVLLEHLGVIAF.

This sequence belongs to the MntP (TC 9.B.29) family.

Its subcellular location is the cell membrane. Its function is as follows. Probably functions as a manganese efflux pump. This chain is Putative manganese efflux pump MntP, found in Bifidobacterium longum subsp. infantis (strain ATCC 15697 / DSM 20088 / JCM 1222 / NCTC 11817 / S12).